The following is a 448-amino-acid chain: Putative F-box/LRR-repeat protein At3g44810 (448 aa).

An F-box domain is found at 6 to 54 (TASLNCLPDELLVHVLSSLETKQAASTSVLSKRWRTLFAVRRNLDFDDS). 6 LRR repeats span residues 117 to 141 (VSEL…VFRS), 143 to 165 (TLVK…TCLP), 190 to 213 (CPAL…VSSK), 228 to 251 (FDWF…TYAR), 290 to 313 (VRNV…CKGG), and 421 to 443 (IVDS…SSRL).

The polypeptide is Putative F-box/LRR-repeat protein At3g44810 (Arabidopsis thaliana (Mouse-ear cress)).